A 513-amino-acid polypeptide reads, in one-letter code: ATP synthase subunit alpha (513 aa).

169-176 (GDRQTGKT) lines the ATP pocket.

The protein belongs to the ATPase alpha/beta chains family. As to quaternary structure, F-type ATPases have 2 components, CF(1) - the catalytic core - and CF(0) - the membrane proton channel. CF(1) has five subunits: alpha(3), beta(3), gamma(1), delta(1), epsilon(1). CF(0) has three main subunits: a(1), b(2) and c(9-12). The alpha and beta chains form an alternating ring which encloses part of the gamma chain. CF(1) is attached to CF(0) by a central stalk formed by the gamma and epsilon chains, while a peripheral stalk is formed by the delta and b chains.

Its subcellular location is the cell inner membrane. The enzyme catalyses ATP + H2O + 4 H(+)(in) = ADP + phosphate + 5 H(+)(out). Functionally, produces ATP from ADP in the presence of a proton gradient across the membrane. The alpha chain is a regulatory subunit. The protein is ATP synthase subunit alpha of Polynucleobacter necessarius subsp. necessarius (strain STIR1).